Reading from the N-terminus, the 117-residue chain is Large ribosomal subunit protein bL20 (117 aa).

Belongs to the bacterial ribosomal protein bL20 family.

Binds directly to 23S ribosomal RNA and is necessary for the in vitro assembly process of the 50S ribosomal subunit. It is not involved in the protein synthesizing functions of that subunit. This is Large ribosomal subunit protein bL20 from Campylobacter jejuni subsp. jejuni serotype O:2 (strain ATCC 700819 / NCTC 11168).